The primary structure comprises 466 residues: tRNA-2-methylthio-N(6)-dimethylallyladenosine synthase (466 aa).

The MTTase N-terminal domain occupies 3–123; sequence KKLYIKTYGC…LPEMVARAVR (121 aa). Residues cysteine 12, cysteine 48, cysteine 86, cysteine 162, cysteine 166, and cysteine 169 each coordinate [4Fe-4S] cluster. The 234-residue stretch at 148–381 folds into the Radical SAM core domain; the sequence is SPAGPSAFLS…QQLLTAQQTA (234 aa). In terms of domain architecture, TRAM spans 384 to 446; sequence TACVGRVQPV…ANSLSGTVVV (63 aa).

The protein belongs to the methylthiotransferase family. MiaB subfamily. Monomer. The cofactor is [4Fe-4S] cluster.

The protein localises to the cytoplasm. The catalysed reaction is N(6)-dimethylallyladenosine(37) in tRNA + (sulfur carrier)-SH + AH2 + 2 S-adenosyl-L-methionine = 2-methylsulfanyl-N(6)-dimethylallyladenosine(37) in tRNA + (sulfur carrier)-H + 5'-deoxyadenosine + L-methionine + A + S-adenosyl-L-homocysteine + 2 H(+). Catalyzes the methylthiolation of N6-(dimethylallyl)adenosine (i(6)A), leading to the formation of 2-methylthio-N6-(dimethylallyl)adenosine (ms(2)i(6)A) at position 37 in tRNAs that read codons beginning with uridine. This Rhodospirillum centenum (strain ATCC 51521 / SW) protein is tRNA-2-methylthio-N(6)-dimethylallyladenosine synthase.